The primary structure comprises 243 residues: Segregation and condensation protein A (243 aa).

Belongs to the ScpA family. In terms of assembly, component of a cohesin-like complex composed of ScpA, ScpB and the Smc homodimer, in which ScpA and ScpB bind to the head domain of Smc. The presence of the three proteins is required for the association of the complex with DNA.

Its subcellular location is the cytoplasm. Functionally, participates in chromosomal partition during cell division. May act via the formation of a condensin-like complex containing Smc and ScpB that pull DNA away from mid-cell into both cell halves. This is Segregation and condensation protein A from Staphylococcus haemolyticus (strain JCSC1435).